We begin with the raw amino-acid sequence, 471 residues long: Rho GTPase-activating protein 15 (471 aa).

Residues 1-20 (MQKSTNSDIPVETLNPTRQG) are disordered. Ser-43 bears the Phosphoserine mark. A PH domain is found at 79–189 (MVEKEGYLQK…WFHAIKNAID (111 aa)). A phosphoserine mark is found at Ser-196, Ser-199, and Ser-243. The Rho-GAP domain maps to 281–470 (SHLHTLCERE…LMLSAYDQIF (190 aa)).

It is found in the cytoplasm. It localises to the membrane. GTPase activator for the Rho-type GTPases by converting them to an inactive GDP-bound state. Has activity toward RAC1. Overexpression results in an increase in actin stress fibers and cell contraction. This is Rho GTPase-activating protein 15 (ARHGAP15) from Bos taurus (Bovine).